Here is a 422-residue protein sequence, read N- to C-terminus: 4-hydroxy-3-methylbut-2-en-1-yl diphosphate synthase (flavodoxin) (422 aa).

[4Fe-4S] cluster is bound by residues Cys-316, Cys-319, Cys-362, and Glu-369.

The protein belongs to the IspG family. The cofactor is [4Fe-4S] cluster.

It catalyses the reaction (2E)-4-hydroxy-3-methylbut-2-enyl diphosphate + oxidized [flavodoxin] + H2O + 2 H(+) = 2-C-methyl-D-erythritol 2,4-cyclic diphosphate + reduced [flavodoxin]. Its pathway is isoprenoid biosynthesis; isopentenyl diphosphate biosynthesis via DXP pathway; isopentenyl diphosphate from 1-deoxy-D-xylulose 5-phosphate: step 5/6. Its function is as follows. Converts 2C-methyl-D-erythritol 2,4-cyclodiphosphate (ME-2,4cPP) into 1-hydroxy-2-methyl-2-(E)-butenyl 4-diphosphate. This is 4-hydroxy-3-methylbut-2-en-1-yl diphosphate synthase (flavodoxin) from Ehrlichia ruminantium (strain Gardel).